The primary structure comprises 419 residues: Multifunctional CCA protein (419 aa).

ATP contacts are provided by glycine 8 and arginine 11. The CTP site is built by glycine 8 and arginine 11. Positions 21 and 23 each coordinate Mg(2+). ATP contacts are provided by arginine 91, arginine 137, and arginine 140. The CTP site is built by arginine 91, arginine 137, and arginine 140. Residues 226 to 327 (TGVHLMMVLD…VRLFDRCDAW (102 aa)) form the HD domain.

It belongs to the tRNA nucleotidyltransferase/poly(A) polymerase family. Bacterial CCA-adding enzyme type 1 subfamily. In terms of assembly, monomer. Can also form homodimers and oligomers. The cofactor is Mg(2+). It depends on Ni(2+) as a cofactor.

It catalyses the reaction a tRNA precursor + 2 CTP + ATP = a tRNA with a 3' CCA end + 3 diphosphate. The enzyme catalyses a tRNA with a 3' CCA end + 2 CTP + ATP = a tRNA with a 3' CCACCA end + 3 diphosphate. Catalyzes the addition and repair of the essential 3'-terminal CCA sequence in tRNAs without using a nucleic acid template. Adds these three nucleotides in the order of C, C, and A to the tRNA nucleotide-73, using CTP and ATP as substrates and producing inorganic pyrophosphate. tRNA 3'-terminal CCA addition is required both for tRNA processing and repair. Also involved in tRNA surveillance by mediating tandem CCA addition to generate a CCACCA at the 3' terminus of unstable tRNAs. While stable tRNAs receive only 3'-terminal CCA, unstable tRNAs are marked with CCACCA and rapidly degraded. The sequence is that of Multifunctional CCA protein from Leptothrix cholodnii (strain ATCC 51168 / LMG 8142 / SP-6) (Leptothrix discophora (strain SP-6)).